The chain runs to 187 residues: Elongation factor P (187 aa).

The protein belongs to the elongation factor P family.

It is found in the cytoplasm. It participates in protein biosynthesis; polypeptide chain elongation. Functionally, involved in peptide bond synthesis. Stimulates efficient translation and peptide-bond synthesis on native or reconstituted 70S ribosomes in vitro. Probably functions indirectly by altering the affinity of the ribosome for aminoacyl-tRNA, thus increasing their reactivity as acceptors for peptidyl transferase. The protein is Elongation factor P of Treponema denticola (strain ATCC 35405 / DSM 14222 / CIP 103919 / JCM 8153 / KCTC 15104).